Here is a 628-residue protein sequence, read N- to C-terminus: Probable potassium transport system protein Kup (628 aa).

A run of 12 helical transmembrane segments spans residues Ala-12–Ser-32, Leu-57–Val-77, Trp-106–Thr-126, Ile-141–Phe-161, Phe-174–Ile-194, Leu-219–Ala-239, Trp-253–Leu-273, Leu-295–Phe-315, Ile-343–Phe-363, Leu-369–Val-389, Ala-402–Leu-422, and Leu-425–Ser-445.

It belongs to the HAK/KUP transporter (TC 2.A.72) family.

It localises to the cell inner membrane. The catalysed reaction is K(+)(in) + H(+)(in) = K(+)(out) + H(+)(out). Its function is as follows. Transport of potassium into the cell. Likely operates as a K(+):H(+) symporter. This chain is Probable potassium transport system protein Kup, found in Azorhizobium caulinodans (strain ATCC 43989 / DSM 5975 / JCM 20966 / LMG 6465 / NBRC 14845 / NCIMB 13405 / ORS 571).